The primary structure comprises 59 residues: Large ribosomal subunit protein uL30 (59 aa).

Belongs to the universal ribosomal protein uL30 family. As to quaternary structure, part of the 50S ribosomal subunit.

The polypeptide is Large ribosomal subunit protein uL30 (Desulforamulus reducens (strain ATCC BAA-1160 / DSM 100696 / MI-1) (Desulfotomaculum reducens)).